Reading from the N-terminus, the 97-residue chain is Glutamyl-tRNA(Gln) amidotransferase subunit C (97 aa).

This sequence belongs to the GatC family. In terms of assembly, heterotrimer of A, B and C subunits.

The catalysed reaction is L-glutamyl-tRNA(Gln) + L-glutamine + ATP + H2O = L-glutaminyl-tRNA(Gln) + L-glutamate + ADP + phosphate + H(+). It carries out the reaction L-aspartyl-tRNA(Asn) + L-glutamine + ATP + H2O = L-asparaginyl-tRNA(Asn) + L-glutamate + ADP + phosphate + 2 H(+). Its function is as follows. Allows the formation of correctly charged Asn-tRNA(Asn) or Gln-tRNA(Gln) through the transamidation of misacylated Asp-tRNA(Asn) or Glu-tRNA(Gln) in organisms which lack either or both of asparaginyl-tRNA or glutaminyl-tRNA synthetases. The reaction takes place in the presence of glutamine and ATP through an activated phospho-Asp-tRNA(Asn) or phospho-Glu-tRNA(Gln). This Saccharolobus solfataricus (strain ATCC 35092 / DSM 1617 / JCM 11322 / P2) (Sulfolobus solfataricus) protein is Glutamyl-tRNA(Gln) amidotransferase subunit C.